A 613-amino-acid polypeptide reads, in one-letter code: Sulfhydryl oxidase 1 (613 aa).

The signal sequence occupies residues 1–30 (MTGCGRRSGWLPPLRLLLLPLLLGGPGVGA). The Thioredoxin domain occupies 37 to 157 (YSASDPLTLL…RERLIDALES (121 aa)). Residues Cys71 and Cys74 each act as nucleophile in the active site. Cystine bridges form between Cys71–Cys74 and Cys102–Cys111. N-linked (GlcNAc...) asparagine glycosylation is found at Asn131 and Asn244. An intrachain disulfide couples Cys394 to Cys406. Residues 397–504 (SESHFRGFPC…EDPQFPKVQW (108 aa)) enclose the ERV/ALR sulfhydryl oxidase domain. Arg402, Trp409, and His413 together coordinate FAD. Ser427 is subject to Phosphoserine. A disulfide bridge links Cys450 with Cys453. FAD-binding positions include Asp452, His456, 479-486 (WTSHNRVN), Lys501, and Trp504. Cys510 and Cys513 form a disulfide bridge.

Belongs to the quiescin-sulfhydryl oxidase (QSOX) family. Monomer. It depends on FAD as a cofactor. Post-translationally, N-glycosylated. O-glycosylated on Thr and Ser residues. As to expression, detected in endometrium and in uterus glandular epithelial cells (at protein level). Expressed in testis, placenta, pancreas, lung, ovary, endometrium, but not in brain, liver and kidney tissues. Higher expression in epithelial cells.

It is found in the secreted. It catalyses the reaction 2 R'C(R)SH + O2 = R'C(R)S-S(R)CR' + H2O2. Functionally, catalyzes the oxidation of sulfhydryl groups in peptide and protein thiols to disulfides with the reduction of oxygen to hydrogen peroxide. Plays a role in disulfide bond formation in a variety of extracellular proteins. In fibroblasts, required for normal incorporation of laminin into the extracellular matrix, and thereby for normal cell-cell adhesion and cell migration. The chain is Sulfhydryl oxidase 1 (QSOX1) from Cavia porcellus (Guinea pig).